Here is a 390-residue protein sequence, read N- to C-terminus: NADH-quinone oxidoreductase subunit D (390 aa).

Belongs to the complex I 49 kDa subunit family. NDH-1 is composed of 14 different subunits. Subunits NuoB, C, D, E, F, and G constitute the peripheral sector of the complex.

It localises to the cell membrane. It catalyses the reaction a quinone + NADH + 5 H(+)(in) = a quinol + NAD(+) + 4 H(+)(out). Functionally, NDH-1 shuttles electrons from NADH, via FMN and iron-sulfur (Fe-S) centers, to quinones in the respiratory chain. The immediate electron acceptor for the enzyme in this species is believed to be ubiquinone. Couples the redox reaction to proton translocation (for every two electrons transferred, four hydrogen ions are translocated across the cytoplasmic membrane), and thus conserves the redox energy in a proton gradient. The chain is NADH-quinone oxidoreductase subunit D from Wolbachia sp. subsp. Brugia malayi (strain TRS).